Here is a 102-residue protein sequence, read N- to C-terminus: Small ribosomal subunit protein bS18 (102 aa).

The protein belongs to the bacterial ribosomal protein bS18 family. In terms of assembly, part of the 30S ribosomal subunit. Forms a tight heterodimer with protein bS6.

Binds as a heterodimer with protein bS6 to the central domain of the 16S rRNA, where it helps stabilize the platform of the 30S subunit. This Orientia tsutsugamushi (strain Boryong) (Rickettsia tsutsugamushi) protein is Small ribosomal subunit protein bS18.